Consider the following 1062-residue polypeptide: MHNIQASSITLGDCLGKGAFGAVYRGLNIKNGETVAVKKVKLSKMLKSDLSVIKMEIDLLKNLDHPNIVKYRGSYQTNDSLCIILEYCENGSLRSICKNFGKIPENLVALYTFQVLQGLLYLHNQGVIHRDIKGANILTTKDGTIKLADFGVATKINALEDHSVVGSPYWMAPEVIELVGATTASDIWSVGCTVIELLDGNPPYYDLDPTSALFRMVKDEHPPLPSNISSAAKSFLMQCFQKDPNLRIKTRKLLKHPWVIMNQTSSKFSDAIDEVQKYNERVKESTLTAIIEPTSNRINPTLHSGRQSSYHMPESPKTPIAESPDHDNWDNEFQGTLKISDDVLKKSEHFMDFCSNFKGKNNSSSITSSPSKSRHAFNSDQISESNNFNASPLSTPLKAQFDPSKPALNRSIDHQKTPQHKRYLSTEFKENIPDGIEKFVETPRDSEFTDIFPTSSIKVQGLRKETGLGTLVLNKCYGSWNNEENEDGEESDIFDSIETNLENLDIENNIALDKRTHLASLLSSLLGSLRDKNIGSKDTTVSQIASILSEDLSLKREIIQAHGILPLLETLREIKTPDVQLLLLKLINTVAFDDHTTLQKVCFAGGLPLMLSFSNREHSFEFRYESAIFIQQMYRTSALTLQMFLSSNGLNSLLLFIKEDYGTNRDFVFVGVEGIWKLLRQQDYIPKNDICTMVVNDSLEPLTKAMLKALATDDDSSRMSLTRICEILLALSQADNYVKESLLCESALRRILRILLYLPHSDMAITLQFFKQLSMVPSSLSLLRKVHIIPLLTHILGDSKIEKGRKEIRSEALAALFNVCKLDKKSQEEAVISGAIPLLQEVIIKDRLFKEFALPILLALPQAGPVSRIYLWQNKCLDFFLSLLSDLNWQSAVFDTIASWLQFELREVQRVLAEKRNVQLVLKVFCISQSASSNRMLDTLGRVCQISPRLAASYGQPIIFQKFKEKLTHKGTKPIVVLNIFQIMKSMCEASSQSVAYIAHCGLPDVVANLNQTSDSVLVKELAKDLLKYLKVPQGPINEHKSPISKPHMPPPRWQPKQPLTQ.

In terms of domain architecture, Protein kinase spans 9-259; the sequence is ITLGDCLGKG…TRKLLKHPWV (251 aa). Residues 15–23 and Lys38 contribute to the ATP site; that span reads LGKGAFGAV. The Proton acceptor role is filled by Asp131. Polar residues-rich tracts occupy residues 296–310 and 376–394; these read NRINPTLHSGRQSSY and AFNSDQISESNNFNASPLS. Disordered stretches follow at residues 296–331, 361–394, and 1038–1062; these read NRINPTLHSGRQSSYHMPESPKTPIAESPDHDNWDN, NNSSSITSSPSKSRHAFNSDQISESNNFNASPLS, and NEHKSPISKPHMPPPRWQPKQPLTQ.

The protein belongs to the protein kinase superfamily. Ser/Thr protein kinase family. CDC7 subfamily. Interacts with spg1. Seems to interact with cdc11. Requires Mg(2+) as cofactor.

It carries out the reaction L-seryl-[protein] + ATP = O-phospho-L-seryl-[protein] + ADP + H(+). It catalyses the reaction L-threonyl-[protein] + ATP = O-phospho-L-threonyl-[protein] + ADP + H(+). Functionally, protein kinase essential for cell division. Plays a key role in initiation of septum formation and cytokinesis. The polypeptide is Cell division control protein 7 (cdc7) (Schizosaccharomyces pombe (strain 972 / ATCC 24843) (Fission yeast)).